Consider the following 223-residue polypeptide: Thymine-DNA glycosylase (223 aa).

Residues C201, C208, C211, and C217 each coordinate [4Fe-4S] cluster.

Belongs to the Nth/MutY family. [4Fe-4S] cluster is required as a cofactor.

It carries out the reaction Hydrolyzes mismatched double-stranded DNA and polynucleotides, releasing free thymine.. With respect to regulation, thymine cleavage is completely inhibited by Ni(2+), Co(2+), Zn(2+), Cu(2+) and Mn(2+). Activity is not affected by Mg(2+) and Ca(2+). Functionally, DNA glycosylase that excises thymine from T/G mismatches. Also has a weak DNA glycosylase activity on uracil paired with various bases. This Aeropyrum pernix (strain ATCC 700893 / DSM 11879 / JCM 9820 / NBRC 100138 / K1) protein is Thymine-DNA glycosylase.